Consider the following 443-residue polypeptide: D(2) dopamine receptor (443 aa).

The Extracellular segment spans residues 1–37 (MDPLNLSWYDDDLERQNWSRPFNGSDGKADRPHYNYY). N-linked (GlcNAc...) asparagine glycans are attached at residues Asn5, Asn17, and Asn23. Residues 38–60 (ATLLTLLIAVIVFGNVLVCMAVS) traverse the membrane as a helical segment. Residues 61-70 (REKALQTTTN) lie on the Cytoplasmic side of the membrane. A helical membrane pass occupies residues 71–93 (YLIVSLAVADLLVATLVMPWVVY). At 94 to 108 (LEVVGEWKFSKIHCD) the chain is on the extracellular side. An intrachain disulfide couples Cys107 to Cys182. Residues 109-130 (IFVTLDVMMCTASILNLCAISI) form a helical membrane-spanning segment. Residues 131–151 (DRYTAVAMPMLYNTRYSSKRR) are Cytoplasmic-facing. Residues 152–172 (VTVMIAIVWVLSFTISCPLLF) traverse the membrane as a helical segment. The Extracellular segment spans residues 173–188 (GLNNADQNECIIANPA). A helical membrane pass occupies residues 189–213 (FVVYSSIVSFYVPFIVTLLVYIKIY). An interaction with PPP1R9B region spans residues 211 to 373 (KIYIVLRRRR…SQQKEKKATQ (163 aa)). The Cytoplasmic portion of the chain corresponds to 214–373 (IVLRRRRKRV…SQQKEKKATQ (160 aa)). The disordered stretch occupies residues 281-332 (MEMLSSTSPPERTRYSPIPPSHHQLTLPDPSHHGLHSTPDSPAKPEKNGHAK). A helical transmembrane segment spans residues 374–395 (MLAIVLGVFIICWLPFFITHIL). Topologically, residues 396-409 (NIHCDCNIPPVLYS) are extracellular. Cys399 and Cys401 are oxidised to a cystine. Residues 410–431 (AFTWLGYVNSAVNPIIYTTFNI) form a helical membrane-spanning segment. The Cytoplasmic portion of the chain corresponds to 432-443 (EFRKAFLKILHC). Cys443 carries S-palmitoyl cysteine lipidation.

Belongs to the G-protein coupled receptor 1 family. In terms of assembly, forms homo- and heterooligomers with DRD4. The interaction with DRD4 may modulate agonist-induced downstream signaling. Interacts with CADPS and CADPS2. Interacts with GPRASP1, PPP1R9B and CLIC6. Interacts with ARRB2. Interacts with HTR2A. Interacts with DRD1. Interacts with KCNA2. Post-translationally, palmitoylated. Palmitoylation which is required for proper localization to the plasma membrane and stability of the receptor could be carried on by ZDHHC4, ZDHHC3 and ZDHHC8.

Its subcellular location is the cell membrane. It is found in the golgi apparatus membrane. Its function is as follows. Dopamine receptor whose activity is mediated by G proteins which inhibit adenylyl cyclase. Positively regulates postnatal regression of retinal hyaloid vessels via suppression of VEGFR2/KDR activity, downstream of OPN5. This Chlorocebus aethiops (Green monkey) protein is D(2) dopamine receptor (DRD2).